The sequence spans 459 residues: Ribulose bisphosphate carboxylase (459 aa).

Asn111 lines the substrate pocket. The active-site Proton acceptor is Lys166. Lys168 contributes to the substrate binding site. Mg(2+) is bound by residues Lys191, Asp193, and Glu194. N6-carboxylysine is present on Lys191. The active-site Proton acceptor is His287. Substrate is bound by residues Arg288, His321, and Ser368.

Belongs to the RuBisCO large chain family. Type II subfamily. In terms of assembly, the complex is approximately 350 kDa when isolated from either T.denitrificans or R.sphaeroides, suggesting a homohexamer or homooctamer structure. Requires Mg(2+) as cofactor.

It catalyses the reaction 2 (2R)-3-phosphoglycerate + 2 H(+) = D-ribulose 1,5-bisphosphate + CO2 + H2O. The enzyme catalyses D-ribulose 1,5-bisphosphate + O2 = 2-phosphoglycolate + (2R)-3-phosphoglycerate + 2 H(+). In terms of biological role, ruBisCO catalyzes two reactions: the carboxylation of D-ribulose 1,5-bisphosphate, the primary event in carbon dioxide fixation, as well as the oxidative fragmentation of the pentose substrate. Both reactions occur simultaneously and in competition at the same active site. The sequence is that of Ribulose bisphosphate carboxylase (cbbM) from Thiobacillus denitrificans (strain ATCC 25259 / T1).